The chain runs to 265 residues: Serine protease ami (265 aa).

The N-terminal stretch at 1 to 21 (MNVSWALLAVVLVLTVATYEC) is a signal peptide. The N-linked (GlcNAc...) asparagine glycan is linked to Asn2. Positions 22 to 26 (RPRGR) are cleaved as a propeptide — activation peptide. Residues 27-254 (ILGGQDSKAE…YKSWIMESMY (228 aa)) form the Peptidase S1 domain. Cys52 and Cys68 are oxidised to a cystine. The active-site Charge relay system is the His67. Asn71, Asn74, and Asn108 each carry an N-linked (GlcNAc...) asparagine glycan. Asp115 serves as the catalytic Charge relay system. 3 cysteine pairs are disulfide-bonded: Cys149/Cys215, Cys180/Cys196, and Cys205/Cys230. The Charge relay system role is filled by Ser209. Residue Asn255 is glycosylated (N-linked (GlcNAc...) asparagine).

Belongs to the peptidase S1 family.

It localises to the secreted. Its function is as follows. Probable serine protease. This chain is Serine protease ami, found in Xenopus tropicalis (Western clawed frog).